The following is a 284-amino-acid chain: Short-chain dehydrogenase RED1 (284 aa).

Ile11, Thr37, Asp58, Asn86, Tyr151, Lys155, Val184, and Thr186 together coordinate NADP(+). Tyr151 serves as the catalytic Proton acceptor. Residue Lys155 is the Lowers pKa of active site Tyr of the active site.

The protein belongs to the short-chain dehydrogenases/reductases (SDR) family.

Its pathway is polyketide biosynthesis. Functionally, short-chain dehydrogenase; part of the gene cluster that mediates the biosynthesis of pyriculol and pyriculariol, two heptaketides that induce lesion formation upon application on rice leaves but are dispensable for pathogenicity. The highly reducing polyketide synthase synthesizes the heptaketide backbone of pyriculol and pyriculariol. Pyriculol and pyriculariol contain several hydroxyl moieties and double bonds, so it can be assumed that several reduction steps occur during biosynthesis. These reactions could be executed by PKS19 itself or partly by the tailoring enzymes OXR1, OXR2, RED1, RED2 or RED3, identified within the cluster. The FAD-linked oxidoreductase OXR1 is the only tailoring enzyme for which the function has been determined yet, and is involved in the oxidation of dihydropyriculol and dihydropyriculariol into pyriculol and pyriculariol, respectively. In Pyricularia oryzae (strain 70-15 / ATCC MYA-4617 / FGSC 8958) (Rice blast fungus), this protein is Short-chain dehydrogenase RED1.